A 363-amino-acid chain; its full sequence is Pyruvate dehydrogenase E1 component subunit alpha, mitochondrial (363 aa).

The N-terminal 2 residues, 1–2, are a transit peptide targeting the mitochondrion; sequence RN. Residue lysine 36 is modified to N6-acetyllysine; alternate. Position 36 is an N6-succinyllysine; alternate (lysine 36). Pyruvate is bound by residues histidine 65, tyrosine 91, arginine 92, alanine 130, glycine 138, valine 140, aspartate 169, glycine 170, alanine 171, asparagine 198, and tyrosine 200. Thiamine diphosphate contacts are provided by tyrosine 91 and arginine 92. Thiamine diphosphate-binding residues include glycine 138, valine 140, aspartate 169, glycine 170, alanine 171, and asparagine 198. Aspartate 169 lines the Mg(2+) pocket. Residues asparagine 198 and tyrosine 200 each contribute to the Mg(2+) site. Phosphoserine; by PDK1 is present on serine 205. Lysine 217 carries the post-translational modification N6-acetyllysine; alternate. Lysine 217 is modified (N6-succinyllysine; alternate). N6-acetyllysine is present on lysine 240. Lysine 250 bears the N6-succinyllysine mark. Residue histidine 265 coordinates thiamine diphosphate. At serine 266 the chain carries Phosphoserine; by PDK1, PDK2, PDK3 and PDK4. Serine 268 carries the post-translational modification Phosphoserine. Serine 273 bears the Phosphoserine; by PDK1, PDK2, PDK3 and PDK4 mark. Tyrosine 274 carries the post-translational modification Phosphotyrosine. Lysine 286 carries the N6-acetyllysine; alternate modification. Lysine 286 is modified (N6-succinyllysine; alternate). Residues lysine 294 and lysine 309 each carry the N6-acetyllysine modification. Lysine 358 carries the post-translational modification N6-succinyllysine.

In terms of assembly, heterotetramer of two PDHA1 and two PDHB subunits. The heterotetramer interacts with DLAT, and is part of the multimeric pyruvate dehydrogenase complex that contains multiple copies of pyruvate dehydrogenase (E1), dihydrolipoamide acetyltransferase (DLAT, E2) and lipoamide dehydrogenase (DLD, E3). These subunits are bound to an inner core composed of about 48 DLAT and 12 PDHX molecules. Thiamine diphosphate serves as cofactor. Requires Mg(2+) as cofactor. Phosphorylation at Ser-205, Ser-266 and Ser-273 by PDK family kinases inactivates the enzyme; for this phosphorylation at a single site is sufficient. Phosphorylation at Ser-266 interferes with access to active site, and thereby inactivates the enzyme. Dephosphorylation at all three sites, i.e. at Ser-205, Ser-266 and Ser-273, is required for reactivation. In terms of processing, acetylation alters the phosphorylation pattern. Deacetylated by SIRT3.

It is found in the mitochondrion matrix. The catalysed reaction is N(6)-[(R)-lipoyl]-L-lysyl-[protein] + pyruvate + H(+) = N(6)-[(R)-S(8)-acetyldihydrolipoyl]-L-lysyl-[protein] + CO2. Its activity is regulated as follows. Pyruvate dehydrogenase activity is inhibited by phosphorylation of PDHA1; it is reactivated by dephosphorylation. The pyruvate dehydrogenase complex catalyzes the overall conversion of pyruvate to acetyl-CoA and CO(2), and thereby links the glycolytic pathway to the tricarboxylic cycle. In Sminthopsis macroura (Stripe-faced dunnart), this protein is Pyruvate dehydrogenase E1 component subunit alpha, mitochondrial (PDHA).